Reading from the N-terminus, the 56-residue chain is Small ribosomal subunit protein uS14B (56 aa).

The Zn(2+) site is built by C21 and C24. Position 25 is a phosphoserine (S25). Zn(2+) is bound by residues C39 and C42.

This sequence belongs to the universal ribosomal protein uS14 family. In terms of assembly, component of the small ribosomal subunit (SSU). Mature yeast ribosomes consist of a small (40S) and a large (60S) subunit. The 40S small subunit contains 1 molecule of ribosomal RNA (18S rRNA) and 33 different proteins (encoded by 57 genes). The large 60S subunit contains 3 rRNA molecules (25S, 5.8S and 5S rRNA) and 46 different proteins (encoded by 81 genes). Requires Zn(2+) as cofactor.

The protein resides in the cytoplasm. Component of the ribosome, a large ribonucleoprotein complex responsible for the synthesis of proteins in the cell. The small ribosomal subunit (SSU) binds messenger RNAs (mRNAs) and translates the encoded message by selecting cognate aminoacyl-transfer RNA (tRNA) molecules. The large subunit (LSU) contains the ribosomal catalytic site termed the peptidyl transferase center (PTC), which catalyzes the formation of peptide bonds, thereby polymerizing the amino acids delivered by tRNAs into a polypeptide chain. The nascent polypeptides leave the ribosome through a tunnel in the LSU and interact with protein factors that function in enzymatic processing, targeting, and the membrane insertion of nascent chains at the exit of the ribosomal tunnel. This chain is Small ribosomal subunit protein uS14B, found in Saccharomyces cerevisiae (strain ATCC 204508 / S288c) (Baker's yeast).